The chain runs to 146 residues: Large ribosomal subunit protein uL15 (146 aa).

The segment covering 1–13 (MKLHELYPAEGSR) has biased composition (basic and acidic residues). Residues 1–55 (MKLHELYPAEGSRKVRNRVGRGAATGNGKTSGRGQKGQKARSGGKVRPGFEGGQL) are disordered. Residues 23 to 35 (AATGNGKTSGRGQ) are compositionally biased toward gly residues.

Belongs to the universal ribosomal protein uL15 family. In terms of assembly, part of the 50S ribosomal subunit.

Its function is as follows. Binds to the 23S rRNA. This chain is Large ribosomal subunit protein uL15, found in Staphylococcus carnosus (strain TM300).